A 1030-amino-acid polypeptide reads, in one-letter code: MMS19 nucleotide excision repair protein homolog (1030 aa).

Residue Ala-2 is modified to N-acetylalanine. Lys-496 carries the post-translational modification N6-acetyllysine. 4 HEAT repeats span residues 866–904, 908–946, 949–987, and 990–1028; these read QRFF…RLPK, LPEL…EAPQ, SLHV…LPTP, and LPYK…LGSP. Ser-1027 carries the phosphoserine modification.

This sequence belongs to the MET18/MMS19 family. As to quaternary structure, component of the CIA complex. In the CIA complex, interacts directly with CIAO2B and CIAO3. Component of the MMXD complex, composed of CIAO1, ERCC2, CIAO2B, MMS19 and SLC25A5. Interacts with CIAO2B; the interaction is direct. Interacts with ERCC2/XPD; the interaction is direct. Interacts with ERCC3/XPB and NCOA3/RAC3. Interacts with RTEL1; the interaction mediates the association of RTEL1 with the CIA complex. Interacts with BRIP1. Interacts with KIF4A; the interaction facilitates the transfer of Fe-S clusters to KIF4A to ensure proper localization of KIF4A to the mitotic machinery components. Interacts with CCDC117; the interaction is indirect. Post-translationally, ubiquitinated; undergoes 'Lys-48'-linked polyubiquitination by MAGEF1-NSMCE1 ubiquitin ligase complex leading to proteasomal degradation. As to expression, ubiquitously expressed with higher expression in testis.

The protein resides in the nucleus. The protein localises to the cytoplasm. Its subcellular location is the cytoskeleton. It localises to the spindle. It is found in the microtubule organizing center. The protein resides in the centrosome. Functionally, key component of the cytosolic iron-sulfur protein assembly (CIA) complex, a multiprotein complex that mediates the incorporation of iron-sulfur cluster into apoproteins specifically involved in DNA metabolism and genomic integrity. In the CIA complex, MMS19 acts as an adapter between early-acting CIA components and a subset of cellular target iron-sulfur proteins such as ERCC2/XPD, FANCJ and RTEL1, thereby playing a key role in nucleotide excision repair (NER), homologous recombination-mediated double-strand break DNA repair, DNA replication and RNA polymerase II (POL II) transcription. As part of the mitotic spindle-associated MMXD complex, plays a role in chromosome segregation, probably by facilitating iron-sulfur (Fe-S) cluster assembly into ERCC2/XPD. Together with CIAO2, facilitates the transfer of Fe-S clusters to the motor protein KIF4A, which ensures proper localization of KIF4A to mitotic machinery components to promote the progression of mitosis. Indirectly acts as a transcriptional coactivator of estrogen receptor (ER), via its role in iron-sulfur insertion into some component of the TFIIH-machinery. The chain is MMS19 nucleotide excision repair protein homolog from Homo sapiens (Human).